The primary structure comprises 369 residues: UDP-N-acetylglucosamine--N-acetylmuramyl-(pentapeptide) pyrophosphoryl-undecaprenol N-acetylglucosamine transferase (369 aa).

UDP-N-acetyl-alpha-D-glucosamine contacts are provided by residues 10 to 12 (TGG), Asn124, Arg166, Ser196, and Gln300.

The protein belongs to the glycosyltransferase 28 family. MurG subfamily.

The protein resides in the cell membrane. The enzyme catalyses di-trans,octa-cis-undecaprenyl diphospho-N-acetyl-alpha-D-muramoyl-L-alanyl-D-glutamyl-meso-2,6-diaminopimeloyl-D-alanyl-D-alanine + UDP-N-acetyl-alpha-D-glucosamine = di-trans,octa-cis-undecaprenyl diphospho-[N-acetyl-alpha-D-glucosaminyl-(1-&gt;4)]-N-acetyl-alpha-D-muramoyl-L-alanyl-D-glutamyl-meso-2,6-diaminopimeloyl-D-alanyl-D-alanine + UDP + H(+). It functions in the pathway cell wall biogenesis; peptidoglycan biosynthesis. Functionally, cell wall formation. Catalyzes the transfer of a GlcNAc subunit on undecaprenyl-pyrophosphoryl-MurNAc-pentapeptide (lipid intermediate I) to form undecaprenyl-pyrophosphoryl-MurNAc-(pentapeptide)GlcNAc (lipid intermediate II). The protein is UDP-N-acetylglucosamine--N-acetylmuramyl-(pentapeptide) pyrophosphoryl-undecaprenol N-acetylglucosamine transferase of Desulfitobacterium hafniense (strain Y51).